The following is a 174-amino-acid chain: Shikimate kinase (174 aa).

10–15 (GSGKTA) contacts ATP. Mg(2+) is bound at residue threonine 14. Substrate contacts are provided by aspartate 32, arginine 56, and glycine 78. Residue arginine 118 coordinates ATP. Arginine 137 serves as a coordination point for substrate. Position 154 (arginine 154) interacts with ATP.

This sequence belongs to the shikimate kinase family. Monomer. It depends on Mg(2+) as a cofactor.

The protein localises to the cytoplasm. The enzyme catalyses shikimate + ATP = 3-phosphoshikimate + ADP + H(+). The protein operates within metabolic intermediate biosynthesis; chorismate biosynthesis; chorismate from D-erythrose 4-phosphate and phosphoenolpyruvate: step 5/7. In terms of biological role, catalyzes the specific phosphorylation of the 3-hydroxyl group of shikimic acid using ATP as a cosubstrate. In Symbiobacterium thermophilum (strain DSM 24528 / JCM 14929 / IAM 14863 / T), this protein is Shikimate kinase.